The chain runs to 37 residues: Photosystem II reaction center protein M (37 aa).

A helical membrane pass occupies residues 7–27; the sequence is GFIAVLMFLAIPTAFLLIPYV.

It belongs to the PsbM family. As to quaternary structure, PSII is composed of 1 copy each of membrane proteins PsbA, PsbB, PsbC, PsbD, PsbE, PsbF, PsbH, PsbI, PsbJ, PsbK, PsbL, PsbM, PsbT, PsbX, PsbY, PsbZ, Psb30/Ycf12, at least 3 peripheral proteins of the oxygen-evolving complex and a large number of cofactors. It forms dimeric complexes.

The protein localises to the plastid. The protein resides in the chloroplast thylakoid membrane. Functionally, one of the components of the core complex of photosystem II (PSII). PSII is a light-driven water:plastoquinone oxidoreductase that uses light energy to abstract electrons from H(2)O, generating O(2) and a proton gradient subsequently used for ATP formation. It consists of a core antenna complex that captures photons, and an electron transfer chain that converts photonic excitation into a charge separation. This subunit is found at the monomer-monomer interface. The polypeptide is Photosystem II reaction center protein M (Pinus koraiensis (Korean pine)).